Consider the following 95-residue polypeptide: Integration host factor subunit beta (95 aa).

It belongs to the bacterial histone-like protein family. Heterodimer of an alpha and a beta chain.

This protein is one of the two subunits of integration host factor, a specific DNA-binding protein that functions in genetic recombination as well as in transcriptional and translational control. This chain is Integration host factor subunit beta, found in Shewanella pealeana (strain ATCC 700345 / ANG-SQ1).